The following is a 368-amino-acid chain: F-box protein At3g17710 (368 aa).

The region spanning 1–46 (MASVKLPWDLEEEILSRLPPRSLVRFRTVCKHWNGLFSDKRFVKKH) is the F-box domain.

The chain is F-box protein At3g17710 from Arabidopsis thaliana (Mouse-ear cress).